The chain runs to 832 residues: DNA polymerase I, thermostable (832 aa).

The 5'-3' exonuclease domain maps to 175–260 (RPDQWADYRA…DLPLEVDFAK (86 aa)). The polymerase stretch occupies residues 410-832 (ERLFANLWGR…IGEDWLSAKE (423 aa)).

The protein belongs to the DNA polymerase type-A family.

The enzyme catalyses DNA(n) + a 2'-deoxyribonucleoside 5'-triphosphate = DNA(n+1) + diphosphate. Functionally, in addition to polymerase activity, this DNA polymerase exhibits 5'-3' exonuclease activity. Unlikely to have 3'-5' exonuclease activity due to absence of a 3'-5' exonuclease domain. The sequence is that of DNA polymerase I, thermostable (polA) from Thermus aquaticus.